Consider the following 145-residue polypeptide: 3-dehydroquinate dehydratase 1 (145 aa).

The active-site Proton acceptor is Tyr24. Substrate contacts are provided by Asn75, His81, and Asp88. His101 serves as the catalytic Proton donor. Residues 102-103 and Arg112 contribute to the substrate site; that span reads IS.

The protein belongs to the type-II 3-dehydroquinase family. As to quaternary structure, homododecamer.

It catalyses the reaction 3-dehydroquinate = 3-dehydroshikimate + H2O. The protein operates within metabolic intermediate biosynthesis; chorismate biosynthesis; chorismate from D-erythrose 4-phosphate and phosphoenolpyruvate: step 3/7. Catalyzes a trans-dehydration via an enolate intermediate. This chain is 3-dehydroquinate dehydratase 1 (aroQ1), found in Agrobacterium fabrum (strain C58 / ATCC 33970) (Agrobacterium tumefaciens (strain C58)).